The following is a 508-amino-acid chain: UDP-N-acetylmuramoyl-L-alanyl-D-glutamate--2,6-diaminopimelate ligase (508 aa).

S29 lines the UDP-N-acetyl-alpha-D-muramoyl-L-alanyl-D-glutamate pocket. An ATP-binding site is contributed by 112 to 118; that stretch reads GTNGKTS. UDP-N-acetyl-alpha-D-muramoyl-L-alanyl-D-glutamate contacts are provided by residues 159–160, S186, Q192, and R194; that span reads TT. The residue at position 226 (K226) is an N6-carboxylysine. Meso-2,6-diaminopimelate contacts are provided by residues R398, 421-424, G473, and E477; that span reads DNPR. A Meso-diaminopimelate recognition motif motif is present at residues 421–424; that stretch reads DNPR.

The protein belongs to the MurCDEF family. MurE subfamily. Requires Mg(2+) as cofactor. Post-translationally, carboxylation is probably crucial for Mg(2+) binding and, consequently, for the gamma-phosphate positioning of ATP.

The protein localises to the cytoplasm. The enzyme catalyses UDP-N-acetyl-alpha-D-muramoyl-L-alanyl-D-glutamate + meso-2,6-diaminopimelate + ATP = UDP-N-acetyl-alpha-D-muramoyl-L-alanyl-gamma-D-glutamyl-meso-2,6-diaminopimelate + ADP + phosphate + H(+). The protein operates within cell wall biogenesis; peptidoglycan biosynthesis. In terms of biological role, catalyzes the addition of meso-diaminopimelic acid to the nucleotide precursor UDP-N-acetylmuramoyl-L-alanyl-D-glutamate (UMAG) in the biosynthesis of bacterial cell-wall peptidoglycan. The protein is UDP-N-acetylmuramoyl-L-alanyl-D-glutamate--2,6-diaminopimelate ligase of Janthinobacterium sp. (strain Marseille) (Minibacterium massiliensis).